The chain runs to 319 residues: Class I histocompatibility antigen, Non-RT1.A alpha-1 chain (319 aa).

Positions 1-24 are cleaved as a signal peptide; sequence MGAMAPRTLLLLLAAVLAPTQTWA. The interval 25-114 is alpha-1; it reads GSHSLRYFHT…LLSYYNQSEG (90 aa). Topologically, residues 25–307 are extracellular; sequence GSHSLRYFHT…WEPSPSTDSN (283 aa). Asn110 is a glycosylation site (N-linked (GlcNAc...) asparagine). An alpha-2 region spans residues 115–206; the sequence is GSHTIQRMYG…ERGKETLLRS (92 aa). Intrachain disulfides connect Cys125-Cys188 and Cys227-Cys283. The interval 207–298 is alpha-3; that stretch reads DPPEAHVTLH…GLPEPLSQRW (92 aa). In terms of domain architecture, Ig-like C1-type spans 209–295; the sequence is PEAHVTLHPR…EHEGLPEPLS (87 aa). N-linked (GlcNAc...) asparagine glycosylation is present at Asn280. Positions 299–307 are connecting peptide; it reads EPSPSTDSN. A helical membrane pass occupies residues 308 to 319; it reads LLLLFLELWQFL.

Belongs to the MHC class I family. In terms of assembly, heterodimer of an alpha chain and a beta chain (beta-2-microglobulin).

It localises to the membrane. Involved in the presentation of foreign antigens to the immune system. The protein is Class I histocompatibility antigen, Non-RT1.A alpha-1 chain (RT1-Aw2) of Rattus norvegicus (Rat).